The following is a 306-amino-acid chain: uncharacterized protein (306 aa).

A coiled-coil region spans residues 277–306; that stretch reads TEIIQNYKIANELKKEKQQNKKKNSIELEE.

This is an uncharacterized protein from Saccharolobus islandicus (Sulfolobus islandicus).